The chain runs to 538 residues: ATP synthase subunit beta 2 (538 aa).

The segment covering 1–10 has biased composition (polar residues); the sequence is MADPQATNGT. The segment at 1 to 30 is disordered; that stretch reads MADPQATNGTGAACAERDASDVGDVSDVGD. 185–192 is a binding site for ATP; the sequence is GGAGVGKT. The span at 494–505 shows a compositional bias: basic and acidic residues; the sequence is AAAREADARREA. Positions 494 to 538 are disordered; sequence AAAREADARREAAAAASVAGPGTTSGTTSDPASGSAEPQGARHGR. Positions 506–529 are enriched in low complexity; it reads AAAASVAGPGTTSGTTSDPASGSA.

Belongs to the ATPase alpha/beta chains family. As to quaternary structure, F-type ATPases have 2 components, CF(1) - the catalytic core - and CF(0) - the membrane proton channel. CF(1) has five subunits: alpha(3), beta(3), gamma(1), delta(1), epsilon(1). CF(0) has three main subunits: a(1), b(2) and c(9-12). The alpha and beta chains form an alternating ring which encloses part of the gamma chain. CF(1) is attached to CF(0) by a central stalk formed by the gamma and epsilon chains, while a peripheral stalk is formed by the delta and b chains.

It is found in the cell inner membrane. It catalyses the reaction ATP + H2O + 4 H(+)(in) = ADP + phosphate + 5 H(+)(out). Functionally, produces ATP from ADP in the presence of a proton gradient across the membrane. The catalytic sites are hosted primarily by the beta subunits. The polypeptide is ATP synthase subunit beta 2 (Burkholderia pseudomallei (strain K96243)).